A 160-amino-acid polypeptide reads, in one-letter code: Ribosomal RNA large subunit methyltransferase H (160 aa).

S-adenosyl-L-methionine is bound by residues leucine 76, glycine 108, and phenylalanine 127 to tryptophan 132.

This sequence belongs to the RNA methyltransferase RlmH family. Homodimer.

It is found in the cytoplasm. The catalysed reaction is pseudouridine(1915) in 23S rRNA + S-adenosyl-L-methionine = N(3)-methylpseudouridine(1915) in 23S rRNA + S-adenosyl-L-homocysteine + H(+). Functionally, specifically methylates the pseudouridine at position 1915 (m3Psi1915) in 23S rRNA. The protein is Ribosomal RNA large subunit methyltransferase H of Bartonella tribocorum (strain CIP 105476 / IBS 506).